The sequence spans 266 residues: GTP cyclohydrolase FolE2 (266 aa).

This sequence belongs to the GTP cyclohydrolase IV family.

It catalyses the reaction GTP + H2O = 7,8-dihydroneopterin 3'-triphosphate + formate + H(+). It functions in the pathway cofactor biosynthesis; 7,8-dihydroneopterin triphosphate biosynthesis; 7,8-dihydroneopterin triphosphate from GTP: step 1/1. Its function is as follows. Converts GTP to 7,8-dihydroneopterin triphosphate. The sequence is that of GTP cyclohydrolase FolE2 from Burkholderia mallei (strain ATCC 23344).